The following is a 250-amino-acid chain: 5'/3'-nucleotidase SurE (250 aa).

A divalent metal cation is bound by residues aspartate 8, aspartate 9, serine 39, and asparagine 92.

It belongs to the SurE nucleotidase family. Requires a divalent metal cation as cofactor.

It is found in the cytoplasm. The catalysed reaction is a ribonucleoside 5'-phosphate + H2O = a ribonucleoside + phosphate. The enzyme catalyses a ribonucleoside 3'-phosphate + H2O = a ribonucleoside + phosphate. It catalyses the reaction [phosphate](n) + H2O = [phosphate](n-1) + phosphate + H(+). Functionally, nucleotidase with a broad substrate specificity as it can dephosphorylate various ribo- and deoxyribonucleoside 5'-monophosphates and ribonucleoside 3'-monophosphates with highest affinity to 3'-AMP. Also hydrolyzes polyphosphate (exopolyphosphatase activity) with the preference for short-chain-length substrates (P20-25). Might be involved in the regulation of dNTP and NTP pools, and in the turnover of 3'-mononucleotides produced by numerous intracellular RNases (T1, T2, and F) during the degradation of various RNAs. The sequence is that of 5'/3'-nucleotidase SurE from Wigglesworthia glossinidia brevipalpis.